Reading from the N-terminus, the 450-residue chain is Glutathione reductase (450 aa).

Residues Ser-14, Gly-15, Glu-34, Thr-41, Cys-42, Lys-50, and Ala-115 each contribute to the FAD site. Ser-14 is a binding site for glutathione. Cys-42 and Cys-47 are oxidised to a cystine. The NADP(+) site is built by Ala-175, Ile-178, Glu-181, Arg-198, Arg-204, and Gly-262. Asp-303 provides a ligand contact to FAD. Asp-309 lines the NADP(+) pocket. Thr-311 lines the FAD pocket. Residue Arg-319 coordinates glutathione. Val-342 lines the NADP(+) pocket. His-439 contacts FAD. Catalysis depends on His-439, which acts as the Proton acceptor.

It belongs to the class-I pyridine nucleotide-disulfide oxidoreductase family. Homodimer. Requires FAD as cofactor.

The protein resides in the cytoplasm. It carries out the reaction 2 glutathione + NADP(+) = glutathione disulfide + NADPH + H(+). Functionally, catalyzes the reduction of glutathione disulfide (GSSG) to reduced glutathione (GSH). Constitutes the major mechanism to maintain a high GSH:GSSG ratio in the cytosol. The polypeptide is Glutathione reductase (gor) (Streptococcus thermophilus).